The chain runs to 20 residues: Antifreeze protein (20 aa).

In terms of processing, N-glycosylated and O-glycosylated.

Its subcellular location is the secreted. It is found in the extracellular space. Its function is as follows. Antifreeze proteins bind to the surface of ice crystals and inhibit the growth of these crystals, this inhibition causes thermal hysteresis. Causes the shape of ice crystals to change from hexagonal to a bipyramidal shape with rugged facets. Inhibits recrystallization of ice crystals. In Antarctomyces psychrotrophicus, this protein is Antifreeze protein.